Reading from the N-terminus, the 473-residue chain is Protein AUXIN RESPONSE 4 (473 aa).

Over residues 1–10 (MAIITEEEED) the composition is skewed to acidic residues. The tract at residues 1 to 38 (MAIITEEEEDPKTLNPPKNKPKDSDFTKSESTMKNPKP) is disordered. The segment covering 29 to 38 (SESTMKNPKP) has biased composition (polar residues). The helical transmembrane segment at 44-64 (FPFWFYFTVVVSLATIIFISL) threads the bilayer. One can recognise an AB hydrolase-1 domain in the interval 119-283 (TVVIVHGLGL…DSSISPALPL (165 aa)).

As to expression, most abundant in root tissue, lesser amounts in rosette leaves, stems and flowers and very little in mature siliques.

It is found in the endoplasmic reticulum membrane. Functionally, required for the auxin influx facilitator AUX1 polar trafficking and its asymmetric localization within the plasma membrane. Not involved in the PIN proteins localization. The polypeptide is Protein AUXIN RESPONSE 4 (AXR4) (Arabidopsis thaliana (Mouse-ear cress)).